The sequence spans 333 residues: 1,5-anhydro-D-fructose reductase (333 aa).

NADP(+)-binding positions include 9–12 (ASTI), 33–34 (SS), R38, 71–76 (TTNELH), 93–94 (EK), N120, 162–163 (WR), and Y283.

This sequence belongs to the Gfo/Idh/MocA family. Monomer.

It carries out the reaction 1,5-anhydro-D-mannitol + NADP(+) = 1,5-anhydro-D-fructose + NADPH + H(+). Its function is as follows. Catalyzes the NADPH-specific reduction of 1,5-anhydro-D-fructose to 1,5-anhydro-D-mannitol. The sequence is that of 1,5-anhydro-D-fructose reductase (afr) from Rhizobium meliloti (strain 1021) (Ensifer meliloti).